The primary structure comprises 361 residues: 3-dehydroquinate synthase (361 aa).

Residues 72-77 (SGEKEK), 130-131 (TT), Lys-142, and Lys-151 contribute to the NAD(+) site. Zn(2+)-binding residues include Glu-184, His-247, and His-264.

Belongs to the sugar phosphate cyclases superfamily. Dehydroquinate synthase family. The cofactor is Co(2+). It depends on Zn(2+) as a cofactor. NAD(+) serves as cofactor.

The protein resides in the cytoplasm. It catalyses the reaction 7-phospho-2-dehydro-3-deoxy-D-arabino-heptonate = 3-dehydroquinate + phosphate. It functions in the pathway metabolic intermediate biosynthesis; chorismate biosynthesis; chorismate from D-erythrose 4-phosphate and phosphoenolpyruvate: step 2/7. Catalyzes the conversion of 3-deoxy-D-arabino-heptulosonate 7-phosphate (DAHP) to dehydroquinate (DHQ). This chain is 3-dehydroquinate synthase, found in Bacillus cereus (strain ATCC 10987 / NRS 248).